A 177-amino-acid polypeptide reads, in one-letter code: Probable prophage lysozyme (177 aa).

Glutamate 35 serves as the catalytic Proton donor. Residue aspartate 44 is the Nucleophile of the active site.

It belongs to the glycosyl hydrolase 24 family.

It catalyses the reaction Hydrolysis of (1-&gt;4)-beta-linkages between N-acetylmuramic acid and N-acetyl-D-glucosamine residues in a peptidoglycan and between N-acetyl-D-glucosamine residues in chitodextrins.. Its function is as follows. Essential for lysis of bacterial cell wall, by showing cell wall hydrolyzing activity. The chain is Probable prophage lysozyme (rrrQ) from Escherichia coli (strain K12).